A 442-amino-acid polypeptide reads, in one-letter code: Histidine--tRNA ligase (442 aa).

It belongs to the class-II aminoacyl-tRNA synthetase family. As to quaternary structure, homodimer.

It localises to the cytoplasm. It catalyses the reaction tRNA(His) + L-histidine + ATP = L-histidyl-tRNA(His) + AMP + diphosphate + H(+). This Helicobacter pylori (strain HPAG1) protein is Histidine--tRNA ligase.